The following is a 661-amino-acid chain: UvrABC system protein B (661 aa).

Residues 25–178 (EGILKGEKFQ…DEVIRDLIRM (154 aa)) form the Helicase ATP-binding domain. An ATP-binding site is contributed by 38 to 45 (GVTGSGKT). A Beta-hairpin motif is present at residues 91–114 (YYDYYQPEAYIPETDTYIEKDSSI). Positions 429–591 (QIDHLIGEIR…IVPQTVRKGI (163 aa)) constitute a Helicase C-terminal domain. The 36-residue stretch at 625-660 (EEYIKELEQEMKKLAIELEFEKAAKVRDKIFELKKL) folds into the UVR domain.

Belongs to the UvrB family. In terms of assembly, forms a heterotetramer with UvrA during the search for lesions. Interacts with UvrC in an incision complex.

It localises to the cytoplasm. In terms of biological role, the UvrABC repair system catalyzes the recognition and processing of DNA lesions. A damage recognition complex composed of 2 UvrA and 2 UvrB subunits scans DNA for abnormalities. Upon binding of the UvrA(2)B(2) complex to a putative damaged site, the DNA wraps around one UvrB monomer. DNA wrap is dependent on ATP binding by UvrB and probably causes local melting of the DNA helix, facilitating insertion of UvrB beta-hairpin between the DNA strands. Then UvrB probes one DNA strand for the presence of a lesion. If a lesion is found the UvrA subunits dissociate and the UvrB-DNA preincision complex is formed. This complex is subsequently bound by UvrC and the second UvrB is released. If no lesion is found, the DNA wraps around the other UvrB subunit that will check the other stand for damage. The polypeptide is UvrABC system protein B (Caldicellulosiruptor bescii (strain ATCC BAA-1888 / DSM 6725 / KCTC 15123 / Z-1320) (Anaerocellum thermophilum)).